A 294-amino-acid polypeptide reads, in one-letter code: MRFSVVFAAIAALSSVVTAERGCGAIPHKGFATELMEAMDNARASSFSNTTAANVTINTYFHVITDGNKGQINNDTLQKQIEVLNKDYSGTGFSFKLVGSERTNNAGWASGNDDFGMKSSLRKGGYDSLNVYFVPMLREGLLGFCHFPTKNPGKRQLIMDGCVINSNTVPGGSAQNYDEGRTTTHEVGHFMGLYHVFNDNGGGCQQDGDMVDDTPVQSKPSSGCPKGKDSCPQQGVDSIHNYMDYSYDSCLNEFSPGQIQRMQMLWKQFRAGNSNRSPKAMKPIIPSYVSDPVM.

An N-terminal signal peptide occupies residues Met1–Ala19. N-linked (GlcNAc...) asparagine glycosylation is found at Asn49, Asn54, and Asn74. Zn(2+) is bound at residue His185. Glu186 is a catalytic residue. A Zn(2+)-binding site is contributed by His189. A disulfide bridge connects residues Cys224 and Cys250.

Belongs to the peptidase M43B family.

Its subcellular location is the secreted. Functionally, secreted metalloproteinase that allows assimilation of proteinaceous substrates. Plays a pivotal role as a pathogenicity determinant during infections and contributes to the ability of the pathogen to persist within the mammalian host. The polypeptide is Extracellular metalloprotease TRV_07111 (Trichophyton verrucosum (strain HKI 0517)).